A 470-amino-acid chain; its full sequence is UDP-N-acetylmuramate--L-alanine ligase (470 aa).

114 to 120 contacts ATP; the sequence is GTHGKTT.

Belongs to the MurCDEF family.

The protein resides in the cytoplasm. The catalysed reaction is UDP-N-acetyl-alpha-D-muramate + L-alanine + ATP = UDP-N-acetyl-alpha-D-muramoyl-L-alanine + ADP + phosphate + H(+). It participates in cell wall biogenesis; peptidoglycan biosynthesis. Cell wall formation. The polypeptide is UDP-N-acetylmuramate--L-alanine ligase (Xanthobacter autotrophicus (strain ATCC BAA-1158 / Py2)).